A 716-amino-acid polypeptide reads, in one-letter code: Fatty acid oxidation complex subunit alpha (716 aa).

Residues 1–189 (MIYQSPTIQV…KVGAIDAVVA (189 aa)) form an enoyl-CoA hydratase/isomerase region. Asp296 is a substrate binding site. Positions 311-716 (KNIDTAAVLG…AANNGSYYQS (406 aa)) are 3-hydroxyacyl-CoA dehydrogenase. NAD(+) contacts are provided by residues Met324, Asp343, 400-402 (VVE), Lys407, and Ser429. His450 (for 3-hydroxyacyl-CoA dehydrogenase activity) is an active-site residue. Asn453 is an NAD(+) binding site. Asn500 is a binding site for substrate.

This sequence in the N-terminal section; belongs to the enoyl-CoA hydratase/isomerase family. It in the C-terminal section; belongs to the 3-hydroxyacyl-CoA dehydrogenase family. In terms of assembly, heterotetramer of two alpha chains (FadB) and two beta chains (FadA).

It carries out the reaction a (3S)-3-hydroxyacyl-CoA + NAD(+) = a 3-oxoacyl-CoA + NADH + H(+). It catalyses the reaction a (3S)-3-hydroxyacyl-CoA = a (2E)-enoyl-CoA + H2O. The catalysed reaction is a 4-saturated-(3S)-3-hydroxyacyl-CoA = a (3E)-enoyl-CoA + H2O. The enzyme catalyses (3S)-3-hydroxybutanoyl-CoA = (3R)-3-hydroxybutanoyl-CoA. It carries out the reaction a (3Z)-enoyl-CoA = a 4-saturated (2E)-enoyl-CoA. It catalyses the reaction a (3E)-enoyl-CoA = a 4-saturated (2E)-enoyl-CoA. It functions in the pathway lipid metabolism; fatty acid beta-oxidation. Involved in the aerobic and anaerobic degradation of long-chain fatty acids via beta-oxidation cycle. Catalyzes the formation of 3-oxoacyl-CoA from enoyl-CoA via L-3-hydroxyacyl-CoA. It can also use D-3-hydroxyacyl-CoA and cis-3-enoyl-CoA as substrate. The chain is Fatty acid oxidation complex subunit alpha from Shewanella sediminis (strain HAW-EB3).